Reading from the N-terminus, the 236-residue chain is Phosphoribosylaminoimidazole-succinocarboxamide synthase (236 aa).

This sequence belongs to the SAICAR synthetase family.

It carries out the reaction 5-amino-1-(5-phospho-D-ribosyl)imidazole-4-carboxylate + L-aspartate + ATP = (2S)-2-[5-amino-1-(5-phospho-beta-D-ribosyl)imidazole-4-carboxamido]succinate + ADP + phosphate + 2 H(+). The protein operates within purine metabolism; IMP biosynthesis via de novo pathway; 5-amino-1-(5-phospho-D-ribosyl)imidazole-4-carboxamide from 5-amino-1-(5-phospho-D-ribosyl)imidazole-4-carboxylate: step 1/2. In Pseudomonas savastanoi pv. phaseolicola (strain 1448A / Race 6) (Pseudomonas syringae pv. phaseolicola (strain 1448A / Race 6)), this protein is Phosphoribosylaminoimidazole-succinocarboxamide synthase.